Reading from the N-terminus, the 492-residue chain is Catalase isozyme 2 (492 aa).

Residues His65 and Asn138 contribute to the active site. Tyr347 lines the heme pocket.

The protein belongs to the catalase family. As to quaternary structure, homotetramer. Requires heme as cofactor. In terms of tissue distribution, high levels in green cotyledons, mature leaf, stem and green hypocotyl.

It localises to the peroxisome. The enzyme catalyses 2 H2O2 = O2 + 2 H2O. Functionally, occurs in almost all aerobically respiring organisms and serves to protect cells from the toxic effects of hydrogen peroxide. The chain is Catalase isozyme 2 (CAT2) from Cucurbita pepo (Vegetable marrow).